We begin with the raw amino-acid sequence, 393 residues long: NAD(P)H-quinone oxidoreductase subunit H 1 (393 aa).

Belongs to the complex I 49 kDa subunit family. As to quaternary structure, NDH-1 can be composed of about 15 different subunits; different subcomplexes with different compositions have been identified which probably have different functions.

Its subcellular location is the cell inner membrane. The catalysed reaction is a plastoquinone + NADH + (n+1) H(+)(in) = a plastoquinol + NAD(+) + n H(+)(out). It carries out the reaction a plastoquinone + NADPH + (n+1) H(+)(in) = a plastoquinol + NADP(+) + n H(+)(out). Functionally, NDH-1 shuttles electrons from an unknown electron donor, via FMN and iron-sulfur (Fe-S) centers, to quinones in the respiratory and/or the photosynthetic chain. The immediate electron acceptor for the enzyme in this species is believed to be plastoquinone. Couples the redox reaction to proton translocation, and thus conserves the redox energy in a proton gradient. Cyanobacterial NDH-1 also plays a role in inorganic carbon-concentration. In Gloeobacter violaceus (strain ATCC 29082 / PCC 7421), this protein is NAD(P)H-quinone oxidoreductase subunit H 1.